The primary structure comprises 128 residues: Centrosomal protein 15 (128 aa).

The protein localises to the cell projection. Its subcellular location is the cilium. Its function is as follows. May play a role in ciliary assembly. This chain is Centrosomal protein 15, found in Homo sapiens (Human).